We begin with the raw amino-acid sequence, 183 residues long: Archaemetzincin (183 aa).

H131 is a Zn(2+) binding site. The Proton acceptor role is filled by E132. Residues H135, H141, C142, C147, C166, and C169 each contribute to the Zn(2+) site.

The protein belongs to the peptidase M54 family. In terms of assembly, monomer. The cofactor is Zn(2+).

Functionally, probable zinc metalloprotease whose natural substrate is unknown. This is Archaemetzincin from Saccharolobus islandicus (strain L.S.2.15 / Lassen #1) (Sulfolobus islandicus).